Here is a 156-residue protein sequence, read N- to C-terminus: Small ribosomal subunit protein uS7 (156 aa).

Belongs to the universal ribosomal protein uS7 family. Part of the 30S ribosomal subunit. Contacts proteins S9 and S11.

One of the primary rRNA binding proteins, it binds directly to 16S rRNA where it nucleates assembly of the head domain of the 30S subunit. Is located at the subunit interface close to the decoding center, probably blocks exit of the E-site tRNA. The sequence is that of Small ribosomal subunit protein uS7 from Kineococcus radiotolerans (strain ATCC BAA-149 / DSM 14245 / SRS30216).